The chain runs to 157 residues: Phosphopantetheine adenylyltransferase (157 aa).

The protein belongs to the eukaryotic CoaD family. As to quaternary structure, monomer.

The protein localises to the cytoplasm. It catalyses the reaction (R)-4'-phosphopantetheine + ATP + H(+) = 3'-dephospho-CoA + diphosphate. It functions in the pathway cofactor biosynthesis; coenzyme A biosynthesis. In terms of biological role, reversibly transfers an adenylyl group from ATP to 4'-phosphopantetheine, yielding dephospho-CoA (dPCoA) and pyrophosphate. This is Phosphopantetheine adenylyltransferase from Pyrococcus abyssi (strain GE5 / Orsay).